Here is a 236-residue protein sequence, read N- to C-terminus: LexA repressor (236 aa).

The segment at residues 26–46 (FDEMKDALDLRSKSGIHRLIT) is a DNA-binding region (H-T-H motif). The interval 85–109 (PSVIEGNLGKVRPPSPTPAEDDHDR) is disordered. Active-site for autocatalytic cleavage activity residues include serine 157 and lysine 195.

The protein belongs to the peptidase S24 family. Homodimer.

The enzyme catalyses Hydrolysis of Ala-|-Gly bond in repressor LexA.. Functionally, represses a number of genes involved in the response to DNA damage (SOS response), including recA and lexA. In the presence of single-stranded DNA, RecA interacts with LexA causing an autocatalytic cleavage which disrupts the DNA-binding part of LexA, leading to derepression of the SOS regulon and eventually DNA repair. In Rhodopseudomonas palustris (strain ATCC BAA-98 / CGA009), this protein is LexA repressor.